The chain runs to 252 residues: Triosephosphate isomerase (252 aa).

A substrate-binding site is contributed by 10-12; it reads NWK. Catalysis depends on His96, which acts as the Electrophile. The Proton acceptor role is filled by Glu168. Residues Gly174, Ser213, and 234-235 each bind substrate; that span reads GG.

The protein belongs to the triosephosphate isomerase family. Homodimer.

It localises to the cytoplasm. It carries out the reaction D-glyceraldehyde 3-phosphate = dihydroxyacetone phosphate. It functions in the pathway carbohydrate biosynthesis; gluconeogenesis. Its pathway is carbohydrate degradation; glycolysis; D-glyceraldehyde 3-phosphate from glycerone phosphate: step 1/1. Involved in the gluconeogenesis. Catalyzes stereospecifically the conversion of dihydroxyacetone phosphate (DHAP) to D-glyceraldehyde-3-phosphate (G3P). The chain is Triosephosphate isomerase from Idiomarina loihiensis (strain ATCC BAA-735 / DSM 15497 / L2-TR).